Consider the following 223-residue polypeptide: Ribose-5-phosphate isomerase A (223 aa).

Substrate contacts are provided by residues 32–35 (TGST), 85–88 (DGAD), and 98–101 (KGGG). The Proton acceptor role is filled by E107. K125 contacts substrate.

It belongs to the ribose 5-phosphate isomerase family. As to quaternary structure, homodimer.

The enzyme catalyses aldehydo-D-ribose 5-phosphate = D-ribulose 5-phosphate. Its pathway is carbohydrate degradation; pentose phosphate pathway; D-ribose 5-phosphate from D-ribulose 5-phosphate (non-oxidative stage): step 1/1. In terms of biological role, catalyzes the reversible conversion of ribose-5-phosphate to ribulose 5-phosphate. The protein is Ribose-5-phosphate isomerase A of Pseudomonas aeruginosa (strain LESB58).